The sequence spans 198 residues: DnaJ homolog subfamily C member 12 (198 aa).

Position 1 is an N-acetylmethionine (M1). Positions 14-79 (DYYTLLGCDE…ESRARYDHWR (66 aa)) constitute a J domain. A disordered region spans residues 121–183 (TNTAQNKERS…CGHLHFRWSG (63 aa)). Positions 126 to 156 (NKERSEQRETKQGDPDSTPEKMMQKESESPE) are enriched in basic and acidic residues. 3 positions are modified to phosphoserine: S160, S166, and S182.

Interacts with HSPA8. Interacts with TPH1. Interacts with TPH2.

The protein resides in the cytoplasm. Functionally, probable co-chaperone that participates in the proper folding of biopterin-dependent aromatic amino acid hydroxylases, which include phenylalanine-4-hydroxylase (PAH), tyrosine 3-monooxygenase (TH) and peripheral and neuronal tryptophan hydroxylases (TPH1 and TPH2). In Rattus norvegicus (Rat), this protein is DnaJ homolog subfamily C member 12 (Dnajc12).